Here is a 77-residue protein sequence, read N- to C-terminus: Conotoxin Ar5.1 b (77 aa).

Residues 1–19 (MLCLPVFIILLLLASPAAS) form the signal peptide. Positions 20–44 (NPLKTRIQSDLIRAALEDADMKNEK) are excised as a propeptide.

The protein belongs to the conotoxin T superfamily. In terms of processing, contains 2 disulfide bonds that can be either 'C1-C3, C2-C4' or 'C1-C4, C2-C3', since these disulfide connectivities have been observed for conotoxins with cysteine framework V (for examples, see AC P0DQQ7 and AC P81755). As to expression, expressed by the venom duct.

Its subcellular location is the secreted. This Conus arenatus (Sand-dusted cone) protein is Conotoxin Ar5.1 b.